Reading from the N-terminus, the 99-residue chain is Carboxysome shell vertex protein CcmL (99 aa).

The region spanning 1–83 (MKIARVCGTV…IDAAVVAIID (83 aa)) is the BMV domain.

This sequence belongs to the CcmL/EutN family. CcmL subfamily. As to quaternary structure, homopentamer. May interact with CcmK2, this occurs at very high CcmK2 concentrations. Interacts with full-length CcmM.

Its subcellular location is the carboxysome. Functionally, probably forms vertices in the carboxysome, a polyhedral inclusion where RuBisCO (ribulose bisphosphate carboxylase, rbcL-rbcS) is sequestered. Has been modeled to induce curvature upon insertion into an otherwise flat hexagonal molecular layer of CcmK subunits. The chain is Carboxysome shell vertex protein CcmL from Thermosynechococcus vestitus (strain NIES-2133 / IAM M-273 / BP-1).